The primary structure comprises 1068 residues: MRSAAKPWNPAIRAGGHGPDRVRPLPAASSGMKSSKSSTSLAFESRLSRLKRASSEDTLNKPGSTAASGVVRLKKTATAGAISELTESRLRSGTGAFTTTKRTGIPAPREFSVTVSRERSVPRGPSNPRKSVSSPTSSNTPTPTKHLRTPSTKPKQENEGGEKAALESQVRELLAEAKAKDSEINRLRSELKKYKEKRTLNAEGTDALGPNVDGTSVSPGDTEPMIRALEEKNKNFQKELSDLEEENRVLKEKLIYLEHSPNSEGAASHTGDSSCPTSITQESSFGSPTGNQMSSDIDEYKKNIHGNALRTSGSSSSDVTKASLSPDASDFEHITAETPSRPLSSTSNPFKSSKCSTAGSSPNSVSELSLASLTEKIQKMEENHHSTAEELQATLQELSDQQQMVQELTAENEKLVDEKTILETSFHQHRERAEQLSQENEKLMNLLQERVKNEEPTTQEGKIIELEQKCTGILEQGRFEREKLLNIQQQLTCSLRKVEEENQGALEMIKRLKEENEKLNEFLELERHNNNMMAKTLEECRVTLEGLKMENGSLKSHLQGEKQKATEASAVEQTAESCEVQEMLKVARAEKDLLELSCNELRQELLKANGEIKHVSSLLAKVEKDYSYLKEICDHQAEQLSRTSLKLQEKASESDAEIKDMKETIFELEDQVEQHRAVKLHNNQLISELESSVIKLEEQKSDLERQLKTLTKQMKEETEEWRRFQADLQTAVVVANDIKCEAQQELRTVKRKLLEEEEKNARLQKELGDVQGHGRVVTSRAAPPPVDEEPESSEVDAAGRWPGVCVSRTSPTPPESATTVKSLIKSFDLGRPGGAGQNISVHKTPRSPLSGIPVRTAPAAAVSPMQRHSTYSSVRPASRGVTQRLDLPDLPLSDILKGRTETLKPDPHLRKSPSLESLSRPPSLGFGDTRLLSASTRAWKPQSKLSVERKDPLAALAREYGGSKRNALLKWCQKKTQGYANIDITNFSSSWSDGLAFCALLHTYLPAHIPYQELNSQEKKRNLLLAFEAAESVGIKPSLELSEMLYTDRPDWQSVMQYVAQIYKYFET.

A disordered region spans residues 1 to 221 (MRSAAKPWNP…VDGTSVSPGD (221 aa)). A lipid anchor (N-myristoyl glycine) is attached at arginine 2. The segment covering 29-40 (SSGMKSSKSSTS) has biased composition (low complexity). Serine 38 and serine 55 each carry phosphoserine. A Phosphothreonine modification is found at threonine 78. A phosphoserine mark is found at serine 112, serine 131, serine 134, serine 137, and serine 138. Residues 126–144 (SNPRKSVSSPTSSNTPTPT) show a composition bias toward low complexity. Residue threonine 142 is modified to Phosphothreonine. The segment covering 154 to 200 (PKQENEGGEKAALESQVRELLAEAKAKDSEINRLRSELKKYKEKRTL) has biased composition (basic and acidic residues). Residues serine 218 and serine 241 each carry the phosphoserine modification. Composition is skewed to polar residues over residues 261–295 (PNSE…QMSS), 309–323 (LRTS…TKAS), and 337–367 (ETPS…SVSE). Positions 261–367 (PNSEGAASHT…AGSSPNSVSE (107 aa)) are disordered. Serine 361, serine 366, serine 369, and serine 425 each carry phosphoserine. The stretch at 579–773 (EVQEMLKVAR…QKELGDVQGH (195 aa)) forms a coiled coil. Residues 777–796 (VTSRAAPPPVDEEPESSEVD) form a disordered region. Serine 847 and serine 863 each carry phosphoserine. 2 disordered regions span residues 859 to 885 (AAAV…TQRL) and 898 to 922 (GRTE…SRPP). The span at 866 to 875 (QRHSTYSSVR) shows a compositional bias: polar residues. Over residues 898-909 (GRTETLKPDPHL) the composition is skewed to basic and acidic residues. Residues serine 912 and serine 914 each carry the phosphoserine modification. Residues 912–922 (SPSLESLSRPP) are compositionally biased toward low complexity. The 106-residue stretch at 962–1067 (GSKRNALLKW…YVAQIYKYFE (106 aa)) folds into the Calponin-homology (CH) domain.

The protein belongs to the cytospin-A family. In terms of tissue distribution, highly expressed in testis. Barely detectable in other tissues. Also highly expressed in some cancer cell lines.

It localises to the nucleus. The protein localises to the membrane. This chain is Cytospin-B (SPECC1), found in Homo sapiens (Human).